The following is a 219-amino-acid chain: 2-hydroxy-3-keto-5-methylthiopentenyl-1-phosphate phosphatase (219 aa).

This sequence belongs to the HAD-like hydrolase superfamily. MtnX family.

The enzyme catalyses 2-hydroxy-5-methylsulfanyl-3-oxopent-1-enyl phosphate + H2O = 1,2-dihydroxy-5-(methylsulfanyl)pent-1-en-3-one + phosphate. Its pathway is amino-acid biosynthesis; L-methionine biosynthesis via salvage pathway; L-methionine from S-methyl-5-thio-alpha-D-ribose 1-phosphate: step 4/6. In terms of biological role, dephosphorylates 2-hydroxy-3-keto-5-methylthiopentenyl-1-phosphate (HK-MTPenyl-1-P) yielding 1,2-dihydroxy-3-keto-5-methylthiopentene (DHK-MTPene). This is 2-hydroxy-3-keto-5-methylthiopentenyl-1-phosphate phosphatase from Bacillus cytotoxicus (strain DSM 22905 / CIP 110041 / 391-98 / NVH 391-98).